A 528-amino-acid chain; its full sequence is MYGIYGLFFAAVALYSVALVIYRLYLHPLSRFPGPKIAAATGWYEFYHEVIRGGMYIHEIQRMHREYGPIIRINPYEIVINDPDYYTTVYVASNTRRSEKWYTLQGTGLEGKALSFFSHFRTCRTRMHMTDQIVGAMGMTMGHELHRRRRKHFDPFFSRLGVTQIEGVILDEIQLLTDRLEGNRKSGRTIQMEHVMAAFTGDIVTKICSEKSPDMIRHPDFGKEWYVTIHTYQLQVHLFVQFPYLISLTQLIPRGLVMHFSPGAAAFKSLHQYAFDHITEAKKDMGRAVKVQQEAGRSSVFRHVLSSDMPGTERETERLAREALQLFGAGTATLVRAFSMIFYHVLSDPQMRGQLREELKDIMAGYPAKRPTWQELERLPYLHGIVKEGLRLSYGVMRHLARVSPDQPLQFREWTIPAGTPVGMSSHSLHSDPETFPEPARFLPERWMKDRHHPNMNRNWVPFARGSRMCIGMNLALAEMYWVLAVLFRPGAPQLELFETTEADVVPVRDYVGGIPEFGTKGVRVRVV.

The chain crosses the membrane as a helical span at residues 5 to 27 (YGLFFAAVALYSVALVIYRLYLH). C470 contributes to the heme binding site.

Belongs to the cytochrome P450 family. Heme serves as cofactor.

The protein resides in the membrane. The enzyme catalyses variecoladiene + 4 reduced [NADPH--hemoprotein reductase] + 4 O2 = variecolin + 4 oxidized [NADPH--hemoprotein reductase] + 6 H2O + 4 H(+). Its pathway is secondary metabolite biosynthesis; terpenoid biosynthesis. Cytochrome P450 monooxygenase; part of the gene cluster that mediates the biosynthesis of the sesterterpene variecolin. The first step in the pathway is performed by the variecoladiene synthase vrcA that possesses both prenyl transferase and terpene cyclase activity, converting isopentenyl diphosphate and dimethylallyl diphosphate into geranylfarnesyl pyrophosphate (GFPP) and then converting GFPP into the tetracyclic variecoladiene. The cytochrome P450 monooxygenase vrcB then catalyzes multiple oxidations at C-5 and C-20 positions to yield variecolin. This chain is Cytochrome P450 monooxygenase vrcB, found in Aspergillus aculeatus (strain ATCC 16872 / CBS 172.66 / WB 5094).